The following is a 191-amino-acid chain: Orotate phosphoribosyltransferase (191 aa).

114–122 contacts 5-phospho-alpha-D-ribose 1-diphosphate; the sequence is EDVVTTGKS. Thr-118 and Arg-146 together coordinate orotate.

This sequence belongs to the purine/pyrimidine phosphoribosyltransferase family. PyrE subfamily. Homodimer. It depends on Mg(2+) as a cofactor.

The catalysed reaction is orotidine 5'-phosphate + diphosphate = orotate + 5-phospho-alpha-D-ribose 1-diphosphate. It participates in pyrimidine metabolism; UMP biosynthesis via de novo pathway; UMP from orotate: step 1/2. Its function is as follows. Catalyzes the transfer of a ribosyl phosphate group from 5-phosphoribose 1-diphosphate to orotate, leading to the formation of orotidine monophosphate (OMP). This chain is Orotate phosphoribosyltransferase, found in Clostridium botulinum (strain Kyoto / Type A2).